The following is a 218-amino-acid chain: Capsid protein (218 aa).

An N-acetylmethionine; by host modification is found at M1. The span at 1 to 10 (MDKSESTSAG) shows a compositional bias: low complexity. The disordered stretch occupies residues 1-30 (MDKSESTSAGRNRRRRLRRGSRSASSSSDA). Residues 11–21 (RNRRRRLRRGS) are compositionally biased toward basic residues.

The protein belongs to the cucumovirus capsid protein family.

It localises to the virion. In terms of biological role, capsid protein. Probably binds RNA and plays a role in packaging. The polypeptide is Capsid protein (Cucumber mosaic virus (strain Y) (CMV)).